Here is a 150-residue protein sequence, read N- to C-terminus: 3-dehydroquinate dehydratase (150 aa).

The Proton acceptor role is filled by Tyr22. Asn73, His79, and Asp86 together coordinate substrate. Catalysis depends on His99, which acts as the Proton donor. Residues 100-101 (LS) and Arg110 each bind substrate.

It belongs to the type-II 3-dehydroquinase family. Homododecamer.

The catalysed reaction is 3-dehydroquinate = 3-dehydroshikimate + H2O. Its pathway is metabolic intermediate biosynthesis; chorismate biosynthesis; chorismate from D-erythrose 4-phosphate and phosphoenolpyruvate: step 3/7. Catalyzes a trans-dehydration via an enolate intermediate. The polypeptide is 3-dehydroquinate dehydratase (Dinoroseobacter shibae (strain DSM 16493 / NCIMB 14021 / DFL 12)).